Reading from the N-terminus, the 957-residue chain is Melanoma-associated antigen E1 (957 aa).

The interval 1 to 455 is disordered; that stretch reads MSLVSQNSRR…DSEGPKGAEG (455 aa). Composition is skewed to polar residues over residues 85–96 and 104–130; these read SEASSASGQPTI and VLPT…SVTL. The span at 138-162 shows a compositional bias: low complexity; sequence TSRPPTSSEEPSTSVPPTASEVPST. Polar residues-rich tracts occupy residues 219 to 244, 268 to 320, 329 to 344, 364 to 380, and 414 to 428; these read GLST…TEGL, PSTS…STSV, STSV…STSV, LSTS…DTSV, and TLFS…NPSK. 2 consecutive MAGE domains span residues 491-690 and 745-936; these read MEQN…YNEA and LESK…YREA. An interaction with DTNA region spans residues 743–957; sequence SRLESKARKL…HRQIFVHNFR (215 aa).

As to quaternary structure, interacts with DTNA. Interacts with TRIM28.

It is found in the cytoplasm. It localises to the perinuclear region. The protein resides in the nucleus. The protein localises to the cell membrane. Its function is as follows. May enhance ubiquitin ligase activity of RING-type zinc finger-containing E3 ubiquitin-protein ligases. Proposed to act through recruitment and/or stabilization of the Ubl-conjugating enzyme (E2) at the E3:substrate complex. This Homo sapiens (Human) protein is Melanoma-associated antigen E1 (MAGEE1).